We begin with the raw amino-acid sequence, 345 residues long: Variable large protein 23 (345 aa).

An N-terminal signal peptide occupies residues 1–18 (MRKRISAIIMTLFMVLVS). Cysteine 19 carries the N-palmitoyl cysteine lipid modification. The S-diacylglycerol cysteine moiety is linked to residue cysteine 19.

Belongs to the variable large protein (Vlp) family. Delta subfamily.

It is found in the cell outer membrane. The Vlp and Vsp proteins are antigenically distinct proteins, only one vlp or vsp gene is transcriptionally active at any one time. Switching between these genes is a mechanism of host immune response evasion. This Borrelia hermsii protein is Variable large protein 23.